Reading from the N-terminus, the 972-residue chain is Microtubule-associated protein 1S (972 aa).

A necessary for the microtubule-organizing center localization region spans residues 1 to 715 (MAAVMAAPEP…SESLPTLSDS (715 aa)). Polar residues predominate over residues 454 to 469 (LEVPSRANSQDSLASR). The interval 454–632 (LEVPSRANSQ…PHSTEVDESL (179 aa)) is disordered. Phosphoserine is present on serine 462. The segment covering 489-505 (VRREPALATRDQKKDTK) has biased composition (basic and acidic residues). 2 stretches are compositionally biased toward pro residues: residues 537–550 (APVP…PAPE) and 564–581 (PPAP…PPTA). Serine 585, serine 590, and serine 592 each carry phosphoserine. A necessary for interaction with RASSF1 region spans residues 600-972 (PDASPSATTP…EAFPACKVEF (373 aa)). The segment covering 602–620 (ASPSATTPTLTTPSLPAEL) has biased composition (low complexity). The segment at 644-879 (DAGLSLPLRL…GGGAGHLDQN (236 aa)) is necessary for association with microtubules. Phosphoserine occurs at positions 659 and 683. The disordered stretch occupies residues 671-854 (CEFSHRKPPP…SSGPSSRPAP (184 aa)). The segment covering 702 to 721 (PTSVSESLPTLSDSDPVPVA) has biased composition (low complexity). Serine 723 is subject to Phosphoserine. A compositionally biased stretch (pro residues) spans 737 to 748 (LPTPRVPPPLPD). Low complexity predominate over residues 781–800 (ARPSSASAAPRAATVAAKTK). Positions 874–972 (GHLDQNFFLR…EAFPACKVEF (99 aa)) are necessary for association with actin. The necessary for the mitochondrial aggregation and genome destruction stretch occupies residues 880-904 (FFLRVRALCYVISGQGQRQEEGLRG).

It belongs to the MAP1A/MAP1B/MAP1S family. As to quaternary structure, heterodimer of a heavy and a light chain. Interacts with microtubules and actin. Both MAP1S heavy and light chains interact with microtubules. MAP1S light chain interacts with actin. Interacts with LRPPRC, RASSF1, microtubules and VCY2. Interacts (via C-terminus) with GAN (via Kelch domains). Interacts with WDR47 (via N-terminus of light chain). Interacts with ESR1. As to expression, expressed in cortex cerebellum, dorsal root ganglia, frontal cortex, hippocampus, hypothalamus, mesencephalon, medulla oblongata, occipital cortex, pons, spinal cord, striatum of the brain, neurons, heart, testis and skeletal muscle (at protein level).

It is found in the nucleus. The protein localises to the cytoplasm. Its subcellular location is the cytosol. The protein resides in the cytoskeleton. It localises to the spindle. In terms of biological role, microtubule-associated protein that mediates aggregation of mitochondria resulting in cell death and genomic destruction (MAGD). Plays a role in anchoring the microtubule organizing center to the centrosomes. Binds to DNA. Plays a role in apoptosis. Involved in the formation of microtubule bundles. The polypeptide is Microtubule-associated protein 1S (Map1s) (Rattus norvegicus (Rat)).